The primary structure comprises 293 residues: Ribosomal protein L11 methyltransferase (293 aa).

4 residues coordinate S-adenosyl-L-methionine: Thr-145, Gly-166, Asp-188, and Asn-230.

Belongs to the methyltransferase superfamily. PrmA family.

Its subcellular location is the cytoplasm. It carries out the reaction L-lysyl-[protein] + 3 S-adenosyl-L-methionine = N(6),N(6),N(6)-trimethyl-L-lysyl-[protein] + 3 S-adenosyl-L-homocysteine + 3 H(+). In terms of biological role, methylates ribosomal protein L11. The protein is Ribosomal protein L11 methyltransferase of Klebsiella pneumoniae (strain 342).